We begin with the raw amino-acid sequence, 26 residues long: Oxyopinin-3b (26 aa).

In terms of tissue distribution, expressed by the venom gland.

The protein resides in the secreted. In terms of biological role, may have cytolytic and antimicrobial activity. The chain is Oxyopinin-3b from Oxyopes takobius (Lynx spider).